Reading from the N-terminus, the 143-residue chain is Small ribosomal subunit protein uS9 (143 aa).

Positions 118-143 (DSRRTEPHKPNRSTKGPRAKRQKSYR) are disordered. The segment covering 127 to 143 (PNRSTKGPRAKRQKSYR) has biased composition (basic residues).

This sequence belongs to the universal ribosomal protein uS9 family.

The sequence is that of Small ribosomal subunit protein uS9 from Thermococcus sibiricus (strain DSM 12597 / MM 739).